Reading from the N-terminus, the 456-residue chain is UDP-N-acetylmuramate--L-alanine ligase (456 aa).

ATP is bound at residue 112–118 (GTHGKTT).

Belongs to the MurCDEF family.

The protein localises to the cytoplasm. The enzyme catalyses UDP-N-acetyl-alpha-D-muramate + L-alanine + ATP = UDP-N-acetyl-alpha-D-muramoyl-L-alanine + ADP + phosphate + H(+). Its pathway is cell wall biogenesis; peptidoglycan biosynthesis. Cell wall formation. The sequence is that of UDP-N-acetylmuramate--L-alanine ligase from Trichlorobacter lovleyi (strain ATCC BAA-1151 / DSM 17278 / SZ) (Geobacter lovleyi).